The following is a 209-amino-acid chain: Uracil phosphoribosyltransferase (209 aa).

5-phospho-alpha-D-ribose 1-diphosphate contacts are provided by residues Arg79, Arg104, and 131–139 (DPMLATGGS). Uracil contacts are provided by residues Ile194 and 199–201 (GDA). Asp200 lines the 5-phospho-alpha-D-ribose 1-diphosphate pocket.

Belongs to the UPRTase family. The cofactor is Mg(2+).

It catalyses the reaction UMP + diphosphate = 5-phospho-alpha-D-ribose 1-diphosphate + uracil. The protein operates within pyrimidine metabolism; UMP biosynthesis via salvage pathway; UMP from uracil: step 1/1. With respect to regulation, allosterically activated by GTP. Its function is as follows. Catalyzes the conversion of uracil and 5-phospho-alpha-D-ribose 1-diphosphate (PRPP) to UMP and diphosphate. In Lachnoclostridium phytofermentans (strain ATCC 700394 / DSM 18823 / ISDg) (Clostridium phytofermentans), this protein is Uracil phosphoribosyltransferase.